The primary structure comprises 1096 residues: Serine-repeat antigen protein 3 (1096 aa).

The N-terminal stretch at 1 to 21 is a signal peptide; it reads MARLSSIVFIICLLLCNNAIS. Residues 28–205 are disordered; that stretch reads PSSGGTLSGG…RSPPPQVNNI (178 aa). Residues 77-97 are compositionally biased toward low complexity; that stretch reads NSDSTGDSSLGSTGSNGSQPA. An N-linked (GlcNAc...) asparagine glycan is attached at N92. The span at 102-113 shows a compositional bias: basic and acidic residues; it reads KEPEPTTPKEPE. The span at 123-147 shows a compositional bias: polar residues; the sequence is VTPQKTAETASGKQVSPTPSENPPS. The span at 149 to 161 shows a compositional bias: basic and acidic residues; it reads DTPKPESSSEKKV. N-linked (GlcNAc...) asparagine glycosylation is found at N204, N607, N637, N662, N671, N712, N892, and N951. Disordered regions lie at residues 916-952 and 964-1006; these read EAKN…QANS and NQRT…ASAN. 2 stretches are compositionally biased toward polar residues: residues 925–952 and 964–975; these read QNYG…QANS and NQRTADSNPNAQ. A compositionally biased stretch (low complexity) spans 976-1006; that stretch reads STPSPNTTVTDTVNSNTANSNTANSNTASAN. N981 and N1039 each carry an N-linked (GlcNAc...) asparagine glycan.

The protein belongs to the peptidase C1 family. In terms of processing, proteolytically cleaved in both blood and liver stage parasites. Precursor of 130 kDa is processed into 72 kDa and 55 kDa forms. Proteolytically cleaved by SUB1.

It is found in the cell membrane. The protein resides in the parasitophorous vacuole. The protein localises to the secreted. It localises to the host cytoplasm. Its function is as follows. Putative cysteine protease. Probably involved in merozoite release from the parasitophorous vacuole during liver stages. This chain is Serine-repeat antigen protein 3, found in Plasmodium berghei (strain Anka).